We begin with the raw amino-acid sequence, 63 residues long: Arabinogalactan peptide 3 (63 aa).

Positions 1–26 are cleaved as a signal peptide; sequence MASRILYAAAVVAAVAVSSLAGVAYA. Ser-36 is lipidated: GPI-anchor amidated serine. Residues 37-63 constitute a propeptide, removed in mature form; the sequence is GAAAVSSSLVAAVLCPAVALLLGNLRQ.

The protein belongs to the AG-peptide AGP family. Post-translationally, O-glycosylated on hydroxyprolines; noncontiguous hydroxylproline residues are glycosylated with arabinogalactan. As to expression, expressed in roots, stems, leaves, flowers and seeds.

It is found in the vacuole. It localises to the aleurone grain membrane. Proteoglycan that seems to be implicated in diverse developmental roles such as differentiation, cell-cell recognition, embryogenesis and programmed cell death. The sequence is that of Arabinogalactan peptide 3 (AGPEP3) from Oryza sativa subsp. japonica (Rice).